Consider the following 419-residue polypeptide: Ribosome biogenesis protein WDR12 homolog (419 aa).

A ubiquitin-like (UBL) domain region spans residues 10–91 (VQVHLKTKQE…EDAIEIEYVE (82 aa)). WD repeat units lie at residues 103 to 141 (LHDDWVSAVKASGKWILTGCYDNTLNIWTNKGKHILTIP), 142 to 184 (GHTA…NTVE), 191 to 230 (GHERGVDSVSVSPDGQRFATGSWDTMLKVWSAELEDAGEG), 249 to 287 (GHRESISAVQWMDASTLLTGSWDHTLKVWDLSLEGIKAE), 289 to 328 (STNKSIFDASYSKLNHLILTASADKNLRLYDSRTNQGSVV), 334 to 374 (GHNA…APLY), and 378 to 416 (GHGEKVLDIDWTNPKYIVSGGSDNTVRVFKSRKALVENM).

This sequence belongs to the WD repeat WDR12/YTM1 family.

The protein resides in the nucleus. It is found in the nucleolus. The protein localises to the nucleoplasm. Its function is as follows. Required for maturation of ribosomal RNAs and formation of the large ribosomal subunit. In Drosophila persimilis (Fruit fly), this protein is Ribosome biogenesis protein WDR12 homolog.